The sequence spans 209 residues: Large ribosomal subunit protein uL3 (209 aa).

The interval 127–166 is disordered; that stretch reads NFGGGSRTHGQSDRLRAPGSVGGSSDPSRTFKGTRMAGRM.

It belongs to the universal ribosomal protein uL3 family. As to quaternary structure, part of the 50S ribosomal subunit. Forms a cluster with proteins L14 and L19.

In terms of biological role, one of the primary rRNA binding proteins, it binds directly near the 3'-end of the 23S rRNA, where it nucleates assembly of the 50S subunit. This is Large ribosomal subunit protein uL3 from Chlorobaculum tepidum (strain ATCC 49652 / DSM 12025 / NBRC 103806 / TLS) (Chlorobium tepidum).